Reading from the N-terminus, the 85-residue chain is Small ribosomal subunit protein uS17 (85 aa).

This sequence belongs to the universal ribosomal protein uS17 family. As to quaternary structure, part of the 30S ribosomal subunit.

Its function is as follows. One of the primary rRNA binding proteins, it binds specifically to the 5'-end of 16S ribosomal RNA. The sequence is that of Small ribosomal subunit protein uS17 from Lachnoclostridium phytofermentans (strain ATCC 700394 / DSM 18823 / ISDg) (Clostridium phytofermentans).